Reading from the N-terminus, the 891-residue chain is DNA mismatch repair protein MutS (891 aa).

ATP is bound at residue 646–653 (GPNMAGKS).

It belongs to the DNA mismatch repair MutS family.

This protein is involved in the repair of mismatches in DNA. It is possible that it carries out the mismatch recognition step. This protein has a weak ATPase activity. This Rickettsia typhi (strain ATCC VR-144 / Wilmington) protein is DNA mismatch repair protein MutS.